We begin with the raw amino-acid sequence, 403 residues long: Poly(rC)-binding protein 4 (403 aa).

KH domains lie at 17–67 (TLTL…TITG), 101–154 (PVTL…TVSG), and 241–293 (TSSQ…TITG).

It localises to the cytoplasm. Single-stranded nucleic acid binding protein that binds preferentially to oligo dC. This Homo sapiens (Human) protein is Poly(rC)-binding protein 4 (PCBP4).